The sequence spans 183 residues: Mitochondrial import inner membrane translocase subunit tim17 (183 aa).

The next 3 helical transmembrane spans lie at 13-33 (AGGA…GLGF), 57-77 (GGNF…LSYI), and 107-127 (VQAA…QHMM). The segment covering 131–141 (MQAQQEEMTQQ) has biased composition (polar residues). Residues 131 to 183 (MQAQQEEMTQQHLEERKRYEEERKQREGERKKLNENGKSKKNKQQQNGENDLD) form a disordered region. Basic and acidic residues predominate over residues 142 to 168 (HLEERKRYEEERKQREGERKKLNENGK). Positions 174-183 (QQQNGENDLD) are enriched in low complexity.

It belongs to the Tim17/Tim22/Tim23 family.

Its subcellular location is the mitochondrion inner membrane. In terms of biological role, may be involved in the translocation of transit peptide-containing proteins across the mitochondrial inner membrane. The polypeptide is Mitochondrial import inner membrane translocase subunit tim17 (timm17) (Dictyostelium discoideum (Social amoeba)).